We begin with the raw amino-acid sequence, 155 residues long: 6,7-dimethyl-8-ribityllumazine synthase (155 aa).

Residues Phe-24, 58-60 (AFE), and 82-84 (VII) each bind 5-amino-6-(D-ribitylamino)uracil. Residue 87–88 (ST) participates in (2S)-2-hydroxy-3-oxobutyl phosphate binding. His-90 serves as the catalytic Proton donor. Phe-115 is a 5-amino-6-(D-ribitylamino)uracil binding site. Arg-129 is a (2S)-2-hydroxy-3-oxobutyl phosphate binding site.

Belongs to the DMRL synthase family.

It catalyses the reaction (2S)-2-hydroxy-3-oxobutyl phosphate + 5-amino-6-(D-ribitylamino)uracil = 6,7-dimethyl-8-(1-D-ribityl)lumazine + phosphate + 2 H2O + H(+). The protein operates within cofactor biosynthesis; riboflavin biosynthesis; riboflavin from 2-hydroxy-3-oxobutyl phosphate and 5-amino-6-(D-ribitylamino)uracil: step 1/2. In terms of biological role, catalyzes the formation of 6,7-dimethyl-8-ribityllumazine by condensation of 5-amino-6-(D-ribitylamino)uracil with 3,4-dihydroxy-2-butanone 4-phosphate. This is the penultimate step in the biosynthesis of riboflavin. In Chlorobium chlorochromatii (strain CaD3), this protein is 6,7-dimethyl-8-ribityllumazine synthase.